A 78-amino-acid polypeptide reads, in one-letter code: RRINNDCQNFIGNRAMYEKVDWICKDCANIFRQDGLLNNCRSNCFYNTEFLWCIDATENTRNKEQLEQWAAILGAGWN.

3 disulfide bridges follow: C7/C44, C24/C40, and C27/C53.

Belongs to the arthropod CHH/MIH/GIH/VIH hormone family. Produced by the medulla terminalis X-organ in the eyestalks and transported to the sinus gland where it is stored and released.

Its subcellular location is the secreted. Represses the synthesis of methyl farnesoate, the precursor of insect juvenile hormone III in the mandibular organ. This chain is Mandibular organ-inhibiting hormone 2, found in Cancer pagurus (Rock crab).